A 432-amino-acid chain; its full sequence is Glutamyl-tRNA reductase (432 aa).

Residues 55–58, S114, 119–121, and Q125 each bind substrate; these read TCNR and ETQ. Residue C56 is the Nucleophile of the active site. 194–199 is a binding site for NADP(+); the sequence is GAGEMI.

This sequence belongs to the glutamyl-tRNA reductase family. In terms of assembly, homodimer.

The catalysed reaction is (S)-4-amino-5-oxopentanoate + tRNA(Glu) + NADP(+) = L-glutamyl-tRNA(Glu) + NADPH + H(+). It participates in porphyrin-containing compound metabolism; protoporphyrin-IX biosynthesis; 5-aminolevulinate from L-glutamyl-tRNA(Glu): step 1/2. Its function is as follows. Catalyzes the NADPH-dependent reduction of glutamyl-tRNA(Glu) to glutamate 1-semialdehyde (GSA). This chain is Glutamyl-tRNA reductase, found in Burkholderia thailandensis (strain ATCC 700388 / DSM 13276 / CCUG 48851 / CIP 106301 / E264).